The sequence spans 814 residues: Flagellar radial spoke protein 1 (814 aa).

Arginine 243 carries the asymmetric dimethylarginine modification. The interval 283–346 is disordered; it reads VQSISTGNRE…PPPPAPKVDP (64 aa). Residues 303-329 show a composition bias toward acidic residues; sequence PEEDEEEEKEEEKEEPEEGEEGEEGEG. An Asymmetric dimethylarginine modification is found at arginine 428. MORN repeat units follow at residues 577–597, 600–622, 623–645, 646–662, 671–685, and 691–707; these read YFGS…FATG, YAGE…DGGT, YVGE…DGSV, YTGS…GVYW, GEWK…GTYE, and FEGE…ATYT. Positions 739 to 769 are disordered; that stretch reads GIPPGSGDEPQLDEEGQPIEDTDKPPLPAHP. Residues 748-758 are compositionally biased toward acidic residues; the sequence is PQLDEEGQPIE.

In terms of processing, asymmetrically dimethylated at Arg-243 and Arg-428 during flagellum resorption. Probably methylated by PRMT1.

The protein localises to the cytoplasm. It localises to the cytoskeleton. Its subcellular location is the flagellum axoneme. In terms of biological role, flagellar radial spokes contribute to the regulation of dynein arm activity and thus the pattern of flagellar bending. They consist of a thin stalk, which is attached to the a subfiber of the outer doublet microtubule, and a bulbous head, which is attached to the stalk and appears to interact with the projections from the central pair of microtubules. The sequence is that of Flagellar radial spoke protein 1 from Chlamydomonas reinhardtii (Chlamydomonas smithii).